The sequence spans 58 residues: Metallothionein (58 aa).

Positions 1-29 are beta; sequence MPDPCCIDKCECKEGGCKAGCKCTSCRCT. The a divalent metal cation site is built by Cys5, Cys6, Cys10, Cys12, Cys17, Cys21, Cys23, Cys26, Cys28, Cys31, Cys34, Cys38, Cys40, Cys46, Cys50, Cys54, Cys56, and Cys57. The interval 30–58 is alpha; sequence PCEKCSSGCKCTTKEDCCKTCTKPCSCCP.

It belongs to the metallothionein superfamily. Type 3 family.

Its function is as follows. Metallothioneins have a high content of cysteine residues that bind various heavy metals. Class I MTS in marine crustacea are involved in the sequestration of elevated levels of heavy-metal ions. The sequence is that of Metallothionein from Carcinus maenas (Common shore crab).